We begin with the raw amino-acid sequence, 377 residues long: MQQNELKTPYFSINEDKLIENLEKAKQLKDISGVKLVLALKCFSTWGVFDIIKPYLDGTTSSGPFEVKLGYETFGGETHAYSVGYSEDDVRDVADICDKMIFNSQSQLAAYRHIVEGKASIGLRLNPGVSYAGQDLANPARQFSRLGVQADHIKPEIFDGIDGVMFHMNCENKDVDAFIGLLDAISAQFGEYLDKLDWVSMGGGVFFTWPGYDIEKLGLALKAFAEKHGVQMYLEPGERIITKTTDLVVTVVDIVENVKKTAIVDSATEAHRLDTLIYNEPASILEASENGEHEYVIGSCSCLAGDQFCVANFEQPLEIGQRLHILDSAGYTMVKLNWFNGLRMPSVYCERSNGDIQKLNEFDYSDFKRSLSQWSVI.

The residue at position 41 (lysine 41) is an N6-(pyridoxal phosphate)lysine. Substrate is bound by residues glutamate 238 and aspartate 274.

Belongs to the Orn/Lys/Arg decarboxylase class-II family. NspC subfamily. As to quaternary structure, homodimer. Pyridoxal 5'-phosphate is required as a cofactor.

It localises to the cytoplasm. It catalyses the reaction carboxynorspermidine + H(+) = norspermidine + CO2. The catalysed reaction is carboxyspermidine + H(+) = spermidine + CO2. Dithiothreitol greatly stimulates activity, maximum stimulation being at 5-20 mM dithiothreitol concentration. Fe(3+), Fe(2+) and Mn(2+) severely inhibit activity (88%, 82% and 50%, respectively), whereas Zn(2+) has a slightly inhibitory effect (23%) and Mg(2+), Ca(2+), Cu(2+) and Cu(+) have no effect. Functionally, catalyzes the decarboxylation of carboxynorspermidine and carboxyspermidine. 2,3-diaminopropionic acid, 2,4-diaminobutyric acid, L-ornithine or L-lysine cannot serve as substrates. The chain is Carboxynorspermidine/carboxyspermidine decarboxylase from Vibrio alginolyticus.